The following is a 162-amino-acid chain: F protein (162 aa).

The interval 1-23 (MSTNPKPQRKKPNVTPTVAHRTS) is disordered. Positions 14-23 (VTPTVAHRTS) are enriched in polar residues.

The protein resides in the host cytoplasm. The protein localises to the host perinuclear region. Contributes to the RIGI-mediated inhibition of type I interferon production. This chain is F protein, found in Homo sapiens (Human).